Consider the following 33-residue polypeptide: MLISLGWAALAATFTFSIAMVVWGRNGDGSINF.

A helical transmembrane segment spans residues 2–22 (LISLGWAALAATFTFSIAMVV).

This sequence belongs to the PetN family. In terms of assembly, the 4 large subunits of the cytochrome b6-f complex are cytochrome b6, subunit IV (17 kDa polypeptide, PetD), cytochrome f and the Rieske protein, while the 4 small subunits are PetG, PetL, PetM and PetN. The complex functions as a dimer.

It is found in the cellular thylakoid membrane. In terms of biological role, component of the cytochrome b6-f complex, which mediates electron transfer between photosystem II (PSII) and photosystem I (PSI), cyclic electron flow around PSI, and state transitions. The protein is Cytochrome b6-f complex subunit 8 of Synechococcus sp. (strain RCC307).